Reading from the N-terminus, the 119-residue chain is Hydrogenase maturation factor HypA (119 aa).

His2 is a Ni(2+) binding site. Cys73, Cys76, Cys90, and Cys93 together coordinate Zn(2+).

It belongs to the HypA/HybF family.

In terms of biological role, involved in the maturation of [NiFe] hydrogenases. Required for nickel insertion into the metal center of the hydrogenase. This chain is Hydrogenase maturation factor HypA, found in Wolinella succinogenes (strain ATCC 29543 / DSM 1740 / CCUG 13145 / JCM 31913 / LMG 7466 / NCTC 11488 / FDC 602W) (Vibrio succinogenes).